The sequence spans 181 residues: Putative poly [ADP-ribose] polymerase-like 100L (181 aa).

The PARP catalytic domain maps to 1-181 (MDNLKEEETN…KIKYIIHITK (181 aa)).

It carries out the reaction NAD(+) + (ADP-D-ribosyl)n-acceptor = nicotinamide + (ADP-D-ribosyl)n+1-acceptor + H(+).. The protein is Putative poly [ADP-ribose] polymerase-like 100L of Invertebrate iridescent virus 6 (IIV-6).